Reading from the N-terminus, the 159-residue chain is 2-C-methyl-D-erythritol 2,4-cyclodiphosphate synthase (159 aa).

Residues Asp-10 and His-12 each contribute to the a divalent metal cation site. 4-CDP-2-C-methyl-D-erythritol 2-phosphate is bound by residues Asp-10 to His-12 and His-36 to Ser-37. His-44 serves as a coordination point for a divalent metal cation. Residues Asp-58–Gly-60, Phe-63–Asp-67, Ala-102–Ala-108, Thr-134–Glu-137, Phe-141, and Arg-144 each bind 4-CDP-2-C-methyl-D-erythritol 2-phosphate.

The protein belongs to the IspF family. As to quaternary structure, homotrimer. A divalent metal cation serves as cofactor.

It carries out the reaction 4-CDP-2-C-methyl-D-erythritol 2-phosphate = 2-C-methyl-D-erythritol 2,4-cyclic diphosphate + CMP. It functions in the pathway isoprenoid biosynthesis; isopentenyl diphosphate biosynthesis via DXP pathway; isopentenyl diphosphate from 1-deoxy-D-xylulose 5-phosphate: step 4/6. Its function is as follows. Involved in the biosynthesis of isopentenyl diphosphate (IPP) and dimethylallyl diphosphate (DMAPP), two major building blocks of isoprenoid compounds. Catalyzes the conversion of 4-diphosphocytidyl-2-C-methyl-D-erythritol 2-phosphate (CDP-ME2P) to 2-C-methyl-D-erythritol 2,4-cyclodiphosphate (ME-CPP) with a corresponding release of cytidine 5-monophosphate (CMP). The sequence is that of 2-C-methyl-D-erythritol 2,4-cyclodiphosphate synthase from Shewanella halifaxensis (strain HAW-EB4).